The sequence spans 184 residues: Leucine-rich repeat-containing protein 20 (184 aa).

LRR repeat units follow at residues 23-44 (GSDT…IYKV), 51-72 (QIHL…FMTT), 75-96 (QLRE…VSSL), 98-120 (HLRA…TTLP), 121-141 (ALET…EKLA), and 145-167 (ALRV…APPL). Position 175 is a phosphoserine (Ser-175).

In Mus musculus (Mouse), this protein is Leucine-rich repeat-containing protein 20 (Lrrc20).